The sequence spans 1285 residues: Peroxidasin homolog pxn-1 (1285 aa).

The first 20 residues, 1-20, serve as a signal peptide directing secretion; sequence MNLYLLLLVIATSSWQFVAG. The LRRNT domain occupies 21–53; the sequence is LECPVECTCDKKGLVVDCSSSGLTRIPKNISRN. 7 LRR repeats span residues 27 to 49, 50 to 72, 73 to 96, 97 to 120, 122 to 143, 145 to 168, and 204 to 227; these read CTCD…IPKN, ISRN…RSDL, EGFN…ENVL, DHLP…PLCS, SRPL…EQVL, YFPD…KLFD, and KVYC…SALT. Asn-49 carries N-linked (GlcNAc...) asparagine glycosylation. The LRRCT domain maps to 180 to 228; it reads SNPWHCDCRASKVKALLQKVKWEKKVYCTNPVELRHQALDEVDDSALTC. N-linked (GlcNAc...) asparagine glycosylation occurs at Asn-248. The disordered stretch occupies residues 305–324; it reads RQSQHQGNGSPQFTYKPRDN. Positions 307–317 are enriched in polar residues; the sequence is SQHQGNGSPQF. 2 consecutive Ig-like C2-type domains span residues 315–401 and 408–495; these read PQFT…FSLD and PNIY…AKLT. Cystine bridges form between Cys-336–Cys-385 and Cys-429–Cys-479. A coiled-coil region spans residues 508 to 550; it reads QIDEELLRAIAQKARQNVENAVEKTRKQLTQDKVTNTNDLKRL. Asn-595 carries N-linked (GlcNAc...) asparagine glycosylation. A disulfide bond links Cys-625 and Cys-641. Residue Asp-719 participates in heme b binding. His-720 (proton acceptor) is an active-site residue. Asp-721 is a Ca(2+) binding site. 2 cysteine pairs are disulfide-bonded: Cys-740–Cys-750 and Cys-744–Cys-771. Asn-741 carries an N-linked (GlcNAc...) asparagine glycan. Ca(2+)-binding residues include Thr-803, Phe-805, Asp-807, and Ser-809. Asn-858 carries N-linked (GlcNAc...) asparagine glycosylation. Heme b is bound by residues Glu-877 and His-973. LRR repeat units follow at residues 998 to 1022 and 1049 to 1073; these read HKAF…GLFA and VSLD…TEYR. 2 disulfides stabilise this stretch: Cys-1076–Cys-1133 and Cys-1174–Cys-1201. An LRR 12 repeat occupies 1168-1189; sequence TLARLFCDNGDNIDRIQKDVFM.

The protein belongs to the peroxidase family. XPO subfamily. The cofactor is Ca(2+). Heme b serves as cofactor. Expressed in the ventral nerve cord, the dorsal nerve cord, head neurons, GABAergic and cholinergic neurons, body wall muscles, vulval muscles, uterine muscles, intestine, the hypodermis and in coelomocytes.

The protein localises to the secreted. Its subcellular location is the extracellular space. It localises to the extracellular matrix. It carries out the reaction L-lysyl-[collagen] + L-methionyl-[collagen] + H2O2 = [collagen]-L-lysyl-N-S-L-methionyl-[collagen] + 2 H2O + H(+). The enzyme catalyses bromide + H2O2 = hypobromite + H2O. The catalysed reaction is L-lysyl-[collagen] + L-methionyl-[collagen] + hypobromite = [collagen]-L-lysyl-N-S-L-methionyl-[collagen] + bromide + H2O + H(+). It catalyses the reaction L-tyrosyl-[protein] + bromide + H2O2 + H(+) = 3-bromo-L-tyrosyl-[protein] + 2 H2O. It carries out the reaction hypobromite + L-tyrosyl-[protein] + H(+) = 3-bromo-L-tyrosyl-[protein] + H2O. Its function is as follows. Catalyzes the two-electron oxidation of bromide by hydrogen peroxide and generates hypobromite as a reactive intermediate which mediates the formation of sulfilimine cross-links between methionine and hydroxylysine residues within an uncross-linked collagen IV NC1 hexamer. Plays a role in the attachment of tissues and in axonal guidance during early developmental stages. May functionally antagonize the peroxidasin pxn-2 to maintain neuronal development. This is Peroxidasin homolog pxn-1 from Caenorhabditis elegans.